The sequence spans 130 residues: Small ribosomal subunit protein uS9 (130 aa).

It belongs to the universal ribosomal protein uS9 family.

The protein is Small ribosomal subunit protein uS9 of Shewanella baltica (strain OS155 / ATCC BAA-1091).